The following is a 139-amino-acid chain: Histone H3 (139 aa).

The disordered stretch occupies residues 1–48 (MARTKSTVIARKVTGGKAPRKQIGSKAARKSAAPSNTSGGVKKPHRYK). Lys5 carries the N6,N6,N6-trimethyllysine; alternate modification. Lys5 carries the N6,N6-dimethyllysine; alternate modification. An N6-methyllysine; alternate mark is found at Lys5 and Lys12. An N6-acetyllysine; alternate mark is found at Lys12, Lys17, Lys21, Lys26, Lys30, and Lys42. Lys17 carries the N6,N6-dimethyllysine; alternate modification. Lys21, Lys26, Lys30, and Lys42 each carry N6-methyllysine; alternate. N6,N6,N6-trimethyllysine; alternate is present on residues Lys30 and Lys42. N6,N6-dimethyllysine; alternate is present on residues Lys30 and Lys42. 2 positions are modified to N6-acetyllysine: Lys62 and Lys70. An N6,N6,N6-trimethyllysine; alternate modification is found at Lys85. The residue at position 85 (Lys85) is an N6,N6-dimethyllysine; alternate. An N6-methyllysine; alternate modification is found at Lys85.

It belongs to the histone H3 family. The nucleosome is a histone octamer containing two molecules each of H2A, H2B, H3 and H4 assembled in one H3-H4 heterotetramer and two H2A-H2B heterodimers. The octamer wraps approximately 147 bp of DNA. Post-translationally, mono-, di- and trimethylated by the COMPASS complex to form H3K4me1/2/3. H3K4me activates gene expression by regulating transcription elongation and plays a role in telomere length maintenance. H3K4me enrichment correlates with transcription levels, and occurs in a 5' to 3' gradient with H3K4me3 enrichment at the 5'-end of genes, shifting to H3K4me2 and then H3K4me1. Methylated by SET2 to form H3K36me. H3K36me represses gene expression. Methylated by DOT1 to form H3K79me. H3K79me is required for association of SIR proteins with telomeric regions and for telomeric silencing. The COMPASS-mediated formation of H3K4me2/3 and the DOT1-mediated formation of H3K79me require H2BK123ub1. In terms of processing, acetylation of histone H3 leads to transcriptional activation. Acetylated by GCN5 to form H3K14ac. H3K14ac can also be formed by ESA1. H3K56ac formation occurs predominantly in newly synthesized H3 molecules during G1, S and G2/M of the cell cycle and may be involved in DNA repair.

It is found in the nucleus. The protein resides in the chromosome. Functionally, core component of nucleosome. Nucleosomes wrap and compact DNA into chromatin, limiting DNA accessibility to the cellular machineries which require DNA as a template. Histones thereby play a central role in transcription regulation, DNA repair, DNA replication and chromosomal stability. DNA accessibility is regulated via a complex set of post-translational modifications of histones, also called histone code, and nucleosome remodeling. In Yarrowia lipolytica (strain CLIB 122 / E 150) (Yeast), this protein is Histone H3 (HHT1).